A 298-amino-acid chain; its full sequence is Mitochondrial nicotinamide adenine dinucleotide transporter SLC25A51 (298 aa).

A compositionally biased stretch (basic and acidic residues) spans 1–11 (MMDSEAHEKRP). Residues 1 to 21 (MMDSEAHEKRPPMLTSSNQDL) are disordered. 3 Solcar repeats span residues 28–108 (VGDM…LSRL), 117–201 (PEFA…IKES), and 214–297 (NDFI…LLKI). A run of 6 helical transmembrane segments spans residues 36–56 (CGYC…KILF), 85–105 (LPPL…YEDL), 119–139 (FATR…LTPF), 180–200 (ILFR…PIKE), 216–236 (FICG…INVV), and 269–290 (LFRG…INAT).

The protein belongs to the mitochondrial carrier (TC 2.A.29) family.

It is found in the mitochondrion inner membrane. The enzyme catalyses NAD(+)(in) = NAD(+)(out). In terms of biological role, mitochondrial membrane carrier protein that mediates the import of NAD(+) into mitochondria. Mitochondrial NAD(+) is required for glycolysis and mitochondrial respiration. Compared to SLC25A52, SLC25A51-mediated transport is essential for the import of NAD(+) in mitochondria. The transport mechanism, uniport or antiport, its electrogenicity and substrate selectivity, remain to be elucidated. The sequence is that of Mitochondrial nicotinamide adenine dinucleotide transporter SLC25A51 from Mus musculus (Mouse).